The primary structure comprises 129 residues: NADH-quinone oxidoreductase subunit A (129 aa).

Helical transmembrane passes span 6–26 (FWPF…IVGF), 63–83 (LVAV…AWAV), and 89–109 (GWIG…ALIY).

Belongs to the complex I subunit 3 family. As to quaternary structure, NDH-1 is composed of 14 different subunits. Subunits NuoA, H, J, K, L, M, N constitute the membrane sector of the complex.

It is found in the cell inner membrane. The enzyme catalyses a quinone + NADH + 5 H(+)(in) = a quinol + NAD(+) + 4 H(+)(out). Functionally, NDH-1 shuttles electrons from NADH, via FMN and iron-sulfur (Fe-S) centers, to quinones in the respiratory chain. The immediate electron acceptor for the enzyme in this species is believed to be ubiquinone. Couples the redox reaction to proton translocation (for every two electrons transferred, four hydrogen ions are translocated across the cytoplasmic membrane), and thus conserves the redox energy in a proton gradient. This is NADH-quinone oxidoreductase subunit A from Nitrosococcus oceani (strain ATCC 19707 / BCRC 17464 / JCM 30415 / NCIMB 11848 / C-107).